Here is an 87-residue protein sequence, read N- to C-terminus: Putative regulatory protein GTNG_1019 (87 aa).

Belongs to the RemA family.

This chain is Putative regulatory protein GTNG_1019, found in Geobacillus thermodenitrificans (strain NG80-2).